The following is a 410-amino-acid chain: Translation initiation factor 2 subunit gamma (410 aa).

The region spanning 9–202 (QAEVNIGMVG…AIEEFIPTPE (194 aa)) is the tr-type G domain. Residues 18–25 (GHVDHGKT) are G1. Positions 21, 25, 46, and 48 each coordinate Mg(2+). 21–26 (DHGKTT) lines the GTP pocket. The G2 stretch occupies residues 46 to 50 (GITIK). The Zn(2+) site is built by cysteine 61, cysteine 64, cysteine 73, and cysteine 76. A G3 region spans residues 90–93 (DAPG). Residues 145–148 (NKIE) and 180–182 (SAL) contribute to the GTP site. The tract at residues 145–148 (NKIE) is G4. A G5 region spans residues 180 to 182 (SAL).

It belongs to the TRAFAC class translation factor GTPase superfamily. Classic translation factor GTPase family. EIF2G subfamily. Heterotrimer composed of an alpha, a beta and a gamma chain. It depends on Mg(2+) as a cofactor.

The enzyme catalyses GTP + H2O = GDP + phosphate + H(+). In terms of biological role, eIF-2 functions in the early steps of protein synthesis by forming a ternary complex with GTP and initiator tRNA. The protein is Translation initiation factor 2 subunit gamma of Thermococcus onnurineus (strain NA1).